Consider the following 1114-residue polypeptide: Lysylphosphatidylglycerol biosynthesis bifunctional protein LysX (1114 aa).

Positions methionine 1–serine 11 are enriched in basic and acidic residues. Residues methionine 1 to lysine 28 are disordered. Positions methionine 1 to glycine 618 are phosphatidylglycerol lysyltransferase. 6 helical membrane passes run isoleucine 38–valine 58, alanine 77–serine 97, isoleucine 101–serine 121, asparagine 126–alanine 146, glycine 164–phenylalanine 184, and phenylalanine 219–leucine 239. The interval glutamate 619–glutamine 1114 is lysine--tRNA ligase. The segment at residues valine 674–methionine 751 is a DNA-binding region (OB). Positions 1025 and 1032 each coordinate Mg(2+).

It in the N-terminal section; belongs to the LPG synthetase family. In the C-terminal section; belongs to the class-II aminoacyl-tRNA synthetase family. It depends on Mg(2+) as a cofactor.

It localises to the cell membrane. It catalyses the reaction tRNA(Lys) + L-lysine + ATP = L-lysyl-tRNA(Lys) + AMP + diphosphate. The enzyme catalyses L-lysyl-tRNA(Lys) + a 1,2-diacyl-sn-glycero-3-phospho-(1'-sn-glycerol) = a 1,2-diacyl-sn-glycero-3-phospho-1'-(3'-O-L-lysyl)-sn-glycerol + tRNA(Lys). Functionally, catalyzes the production of L-lysyl-tRNA(Lys)transfer and the transfer of a lysyl group from L-lysyl-tRNA(Lys) to membrane-bound phosphatidylglycerol (PG), which produces lysylphosphatidylglycerol (LPG), one of the components of the bacterial membrane with a positive net charge. LPG synthesis contributes to the resistance to cationic antimicrobial peptides (CAMPs) and likely protects M.tuberculosis against the CAMPs produced by competiting microorganisms (bacteriocins). In fact, the modification of anionic phosphatidylglycerol with positively charged L-lysine results in repulsion of the peptides. This Rhodococcus opacus (strain B4) protein is Lysylphosphatidylglycerol biosynthesis bifunctional protein LysX (lysX).